We begin with the raw amino-acid sequence, 433 residues long: tRNA(Ile2) 2-agmatinylcytidine synthetase TiaS (433 aa).

This sequence belongs to the TiaS family.

It localises to the cytoplasm. The enzyme catalyses cytidine(34) in tRNA(Ile2) + agmatine + ATP + H2O = 2-agmatinylcytidine(34) in tRNA(Ile2) + AMP + 2 phosphate + 2 H(+). In terms of biological role, ATP-dependent agmatine transferase that catalyzes the formation of 2-agmatinylcytidine (agm2C) at the wobble position (C34) of tRNA(Ile2), converting the codon specificity from AUG to AUA. This Methanopyrus kandleri (strain AV19 / DSM 6324 / JCM 9639 / NBRC 100938) protein is tRNA(Ile2) 2-agmatinylcytidine synthetase TiaS.